We begin with the raw amino-acid sequence, 289 residues long: Nucleotide-binding protein Franean1_2060 (289 aa).

Residue 13–20 (GLSGAGRS) coordinates ATP. 64 to 67 (DVRG) provides a ligand contact to GTP.

It belongs to the RapZ-like family.

In terms of biological role, displays ATPase and GTPase activities. The polypeptide is Nucleotide-binding protein Franean1_2060 (Parafrankia sp. (strain EAN1pec)).